A 91-amino-acid polypeptide reads, in one-letter code: Acylphosphatase (91 aa).

An Acylphosphatase-like domain is found at 5–91; the sequence is CLHAYVGGRV…QGIAGFIVRR (87 aa). Residues arginine 20 and asparagine 38 contribute to the active site.

It belongs to the acylphosphatase family.

The enzyme catalyses an acyl phosphate + H2O = a carboxylate + phosphate + H(+). The polypeptide is Acylphosphatase (acyP) (Pseudomonas paraeruginosa (strain DSM 24068 / PA7) (Pseudomonas aeruginosa (strain PA7))).